Here is a 1107-residue protein sequence, read N- to C-terminus: Protein translocase subunit SecA (1107 aa).

Residues Q169, 187–191, and D688 contribute to the ATP site; that span reads GEGKT. Basic and acidic residues predominate over residues 1036–1066; sequence RHAAEQRTDMSKYRTQKDDIEAQQKAQRDAA. A disordered region spans residues 1036-1107; that stretch reads RHAAEQRTDM…KFKQCHGRNL (72 aa). Residues C1091, C1093, C1102, and H1103 each coordinate Zn(2+). Residues 1097–1107 are compositionally biased toward basic residues; that stretch reads KKFKQCHGRNL.

This sequence belongs to the SecA family. In terms of assembly, monomer and homodimer. Part of the essential Sec protein translocation apparatus which comprises SecA, SecYEG and auxiliary proteins SecDF. Other proteins may also be involved. Zn(2+) is required as a cofactor.

The protein localises to the cell inner membrane. Its subcellular location is the cytoplasm. It carries out the reaction ATP + H2O + cellular proteinSide 1 = ADP + phosphate + cellular proteinSide 2.. In terms of biological role, part of the Sec protein translocase complex. Interacts with the SecYEG preprotein conducting channel. Has a central role in coupling the hydrolysis of ATP to the transfer of proteins into and across the cell membrane, serving as an ATP-driven molecular motor driving the stepwise translocation of polypeptide chains across the membrane. This is Protein translocase subunit SecA from Porphyromonas gingivalis (strain ATCC BAA-308 / W83).